A 108-amino-acid polypeptide reads, in one-letter code: ATP synthase peripheral stalk subunit F6, mitochondrial (108 aa).

A mitochondrion-targeting transit peptide spans 1–32 (MILQRLFRLSSAVQSAISVSWRRNIGITAVAF). N6-acetyllysine is present on residues K41, K46, and K79. Residues K84 and K99 each carry the N6-acetyllysine; alternate modification. K84 and K99 each carry N6-succinyllysine; alternate. N6-acetyllysine is present on K105. The residue at position 108 (S108) is a Phosphoserine.

Belongs to the eukaryotic ATPase subunit F6 family. In terms of assembly, component of the ATP synthase complex composed at least of ATP5F1A/subunit alpha, ATP5F1B/subunit beta, ATP5MC1/subunit c (homooctomer), MT-ATP6/subunit a, MT-ATP8/subunit 8, ATP5ME/subunit e, ATP5MF/subunit f, ATP5MG/subunit g, ATP5MK/subunit k, ATP5MJ/subunit j, ATP5F1C/subunit gamma, ATP5F1D/subunit delta, ATP5F1E/subunit epsilon, ATP5PF/subunit F6, ATP5PB/subunit b, ATP5PD/subunit d, ATP5PO/subunit OSCP. ATP synthase complex consists of a soluble F(1) head domain (subunits alpha(3) and beta(3)) - the catalytic core - and a membrane F(0) domain - the membrane proton channel (subunits c, a, 8, e, f, g, k and j). These two domains are linked by a central stalk (subunits gamma, delta, and epsilon) rotating inside the F1 region and a stationary peripheral stalk (subunits F6, b, d, and OSCP).

It localises to the mitochondrion. The protein localises to the mitochondrion inner membrane. Subunit F6, of the mitochondrial membrane ATP synthase complex (F(1)F(0) ATP synthase or Complex V) that produces ATP from ADP in the presence of a proton gradient across the membrane which is generated by electron transport complexes of the respiratory chain. ATP synthase complex consist of a soluble F(1) head domain - the catalytic core - and a membrane F(1) domain - the membrane proton channel. These two domains are linked by a central stalk rotating inside the F(1) region and a stationary peripheral stalk. During catalysis, ATP synthesis in the catalytic domain of F(1) is coupled via a rotary mechanism of the central stalk subunits to proton translocation. In vivo, can only synthesize ATP although its ATP hydrolase activity can be activated artificially in vitro. Part of the complex F(0) domain. Part of the complex F(0) domain and the peripheric stalk, which acts as a stator to hold the catalytic alpha(3)beta(3) subcomplex and subunit a/ATP6 static relative to the rotary elements. This Bos taurus (Bovine) protein is ATP synthase peripheral stalk subunit F6, mitochondrial.